The chain runs to 1272 residues: Ubiquitin carboxyl-terminal hydrolase 2 (1272 aa).

In terms of domain architecture, USP spans 736 to 1258 (TGINNIGNTC…TPYFLVYVKQ (523 aa)). Catalysis depends on Cys745, which acts as the Nucleophile. The segment at 884–918 (DGLNGDVGTDANRKKNESNDAEVSENEDTTGLTSP) is disordered. Residues 902–911 (NDAEVSENED) show a composition bias toward acidic residues. Phosphoserine is present on Ser907. His1209 acts as the Proton acceptor in catalysis.

This sequence belongs to the peptidase C19 family. Forms a ternary complex with RSP5 and RUP1. Interacts with RSP5. Interacts with FZO1.

It carries out the reaction Thiol-dependent hydrolysis of ester, thioester, amide, peptide and isopeptide bonds formed by the C-terminal Gly of ubiquitin (a 76-residue protein attached to proteins as an intracellular targeting signal).. Functionally, has an ATP-independent isopeptidase activity, cleaving at the C-terminus of the ubiquitin moiety in natural or engineered linear fusion proteins, irrespective of their size or the presence of an N-terminal extension to ubiquitin. Hydrolyzes polyubiquitinated 'Lys-63' polyubiquitin chains in RPO21, producing mono-ubiquitinated RNA polymerase II. Removes ubiquitin chains that initiate proteolysis of FZO1 and inhibit mitochondrial fusion. In Saccharomyces cerevisiae (strain ATCC 204508 / S288c) (Baker's yeast), this protein is Ubiquitin carboxyl-terminal hydrolase 2 (UBP2).